The sequence spans 449 residues: Glutamyl-tRNA reductase (449 aa).

Substrate contacts are provided by residues T58 to R61, S121, E126 to Q128, and Q132. C59 acts as the Nucleophile in catalysis. NADP(+) is bound at residue G203–A208.

It belongs to the glutamyl-tRNA reductase family. In terms of assembly, homodimer.

The enzyme catalyses (S)-4-amino-5-oxopentanoate + tRNA(Glu) + NADP(+) = L-glutamyl-tRNA(Glu) + NADPH + H(+). Its pathway is porphyrin-containing compound metabolism; protoporphyrin-IX biosynthesis; 5-aminolevulinate from L-glutamyl-tRNA(Glu): step 1/2. In terms of biological role, catalyzes the NADPH-dependent reduction of glutamyl-tRNA(Glu) to glutamate 1-semialdehyde (GSA). The chain is Glutamyl-tRNA reductase from Helicobacter pylori (strain HPAG1).